The chain runs to 367 residues: Ferrochelatase (367 aa).

Residues His-213 and Glu-294 each coordinate Fe cation.

Belongs to the ferrochelatase family.

The protein resides in the cytoplasm. It catalyses the reaction heme b + 2 H(+) = protoporphyrin IX + Fe(2+). It functions in the pathway porphyrin-containing compound metabolism; protoheme biosynthesis; protoheme from protoporphyrin-IX: step 1/1. Its function is as follows. Catalyzes the ferrous insertion into protoporphyrin IX. The chain is Ferrochelatase from Polaromonas sp. (strain JS666 / ATCC BAA-500).